Reading from the N-terminus, the 246-residue chain is 4-hydroxy-tetrahydrodipicolinate reductase (246 aa).

An NAD(+)-binding site is contributed by 7-12; that stretch reads GCSGRM. R34 lines the NADP(+) pocket. NAD(+) contacts are provided by residues 76-78 and 102-105; these read ATT and CPNT. The Proton donor/acceptor role is filled by H135. H136 contacts (S)-2,3,4,5-tetrahydrodipicolinate. K139 (proton donor) is an active-site residue. 145–146 is a binding site for (S)-2,3,4,5-tetrahydrodipicolinate; the sequence is GT.

This sequence belongs to the DapB family.

The protein resides in the cytoplasm. It catalyses the reaction (S)-2,3,4,5-tetrahydrodipicolinate + NAD(+) + H2O = (2S,4S)-4-hydroxy-2,3,4,5-tetrahydrodipicolinate + NADH + H(+). The enzyme catalyses (S)-2,3,4,5-tetrahydrodipicolinate + NADP(+) + H2O = (2S,4S)-4-hydroxy-2,3,4,5-tetrahydrodipicolinate + NADPH + H(+). It functions in the pathway amino-acid biosynthesis; L-lysine biosynthesis via DAP pathway; (S)-tetrahydrodipicolinate from L-aspartate: step 4/4. Catalyzes the conversion of 4-hydroxy-tetrahydrodipicolinate (HTPA) to tetrahydrodipicolinate. The protein is 4-hydroxy-tetrahydrodipicolinate reductase of Chlamydia caviae (strain ATCC VR-813 / DSM 19441 / 03DC25 / GPIC) (Chlamydophila caviae).